Here is a 117-residue protein sequence, read N- to C-terminus: Ig kappa chain V region 12F2 (117 aa).

A signal peptide spans Leu1–Cys6. The tract at residues Ala7–Cys29 is framework-1. A disulfide bond links Cys29 and Cys86. Positions Gln30–Ser40 are complementarity-determining-1. The segment at Trp41–Tyr55 is framework-2. The tract at residues Arg56–Ser62 is complementarity-determining-2. The tract at residues Gly63–Cys94 is framework-3. The segment at Gln95–Val106 is complementarity-determining-3. The segment at Phe107 to Lys116 is framework-4.

This is Ig kappa chain V region 12F2 from Oryctolagus cuniculus (Rabbit).